Consider the following 447-residue polypeptide: N-succinylarginine dihydrolase (447 aa).

Residues 19-28 (AGLSFGNKAS), asparagine 110, and 137-138 (HR) contribute to the substrate site. Glutamate 174 is an active-site residue. Arginine 212 contacts substrate. The active site involves histidine 248. The substrate site is built by aspartate 250 and asparagine 359. Cysteine 365 serves as the catalytic Nucleophile.

Belongs to the succinylarginine dihydrolase family. As to quaternary structure, homodimer.

The catalysed reaction is N(2)-succinyl-L-arginine + 2 H2O + 2 H(+) = N(2)-succinyl-L-ornithine + 2 NH4(+) + CO2. It participates in amino-acid degradation; L-arginine degradation via AST pathway; L-glutamate and succinate from L-arginine: step 2/5. Catalyzes the hydrolysis of N(2)-succinylarginine into N(2)-succinylornithine, ammonia and CO(2). The polypeptide is N-succinylarginine dihydrolase (Escherichia coli O157:H7).